Reading from the N-terminus, the 1611-residue chain is DNA (cytosine-5)-methyltransferase 1 (1611 aa).

An interaction with DMAP1 region spans residues 1–120; it reads MPARTAPARV…SQTSGEDCRV (120 aa). Residues 1–148 form an interaction with DNMT3A region; it reads MPARTAPARV…RRSKSDGETK (148 aa). 2 interaction with the PRC2/EED-EZH2 complex regions span residues 1 to 334 and 306 to 603; these read MPAR…TEKK and KPQV…TIRQ. At Ser-15 the chain carries Phosphoserine. Residues 16 to 109 enclose the DMAP1-binding domain; the sequence is RAFSLPDDVR…SREANGCLEN (94 aa). Residue Lys-70 is modified to N6,N6-dimethyllysine; by EHMT2. The tract at residues 123-328 is disordered; it reads AEKGKPPKPV…EEKRRRTTYR (206 aa). Ser-133 carries the phosphoserine modification. A Phosphothreonine modification is found at Thr-137. Phosphoserine is present on Ser-141. At Lys-142 the chain carries N6-methyllysine; by SETD7. Ser-143 is subject to Phosphoserine; by PKB/AKT1. The tract at residues 149–216 is interaction with DNMT3B; the sequence is SEVSSSPRIT…TSRERVAGLL (68 aa). Residues Ser-152 and Ser-154 each carry the phosphoserine modification. Position 160 is an N6-acetyllysine (Lys-160). The interaction with PCNA stretch occupies residues 163–174; sequence RQTTITSHFPRG. Residues 163–174 show a composition bias toward low complexity; the sequence is RQTTITSHFPRG. Phosphothreonine is present on Thr-166. Positions 177 to 204 match the Nuclear localization signal motif; the sequence is KRKPEEEPEKVKSDDSVDEEKDQEEKRR. Composition is skewed to basic and acidic residues over residues 178 to 191, 199 to 212, 220 to 265, 279 to 311, and 319 to 328; these read RKPE…KSDD, QEEK…RERV, EPGR…RDVR, KDEK…QVSD, and EEKRRRTTYR. Lys-188 is subject to N6-acetyllysine. Lys-257 carries the N6-acetyllysine; alternate modification. Residue Lys-257 forms a Glycyl lysine isopeptide (Lys-Gly) (interchain with G-Cter in SUMO2); alternate linkage. At Ser-310 the chain carries Phosphoserine. The interval 329–548 is DNA replication foci-targeting sequence; it reads ELTEKKMTRT…NLNRFTEDSL (220 aa). Residues Cys-351 and Cys-354 each contribute to the Zn(2+) site. Residues Ser-392 and Ser-396 each carry the phosphoserine modification. Residues Cys-412 and His-416 each contribute to the Zn(2+) site. Phosphoserine occurs at positions 507 and 547. Positions 594–614 are disordered; the sequence is RAERRQTIRQPAKEKDKGPTK. The segment at 643–689 adopts a CXXC-type zinc-finger fold; it reads NAFKRRRCGVCEICQQPECGKCKACKDMVKFGGSGRSKQACQKRRCP. Zn(2+)-binding residues include Cys-650, Cys-653, Cys-656, Cys-661, Cys-664, Cys-667, Cys-683, and Cys-688. The segment at 690–751 is autoinhibitory linker; the sequence is NMAMKEADDD…SYYKKVCIDS (62 aa). The interval 695–726 is disordered; that stretch reads EADDDEEVDDNIPEMPSPKKMHQGKKKKQNKN. The segment covering 696-706 has biased composition (acidic residues); that stretch reads ADDDEEVDDNI. A Phosphoserine modification is found at Ser-711. The segment covering 713-725 has biased composition (basic residues); sequence KKMHQGKKKKQNK. Ser-729 is subject to Phosphoserine. Lys-746 carries the N6-acetyllysine modification. One can recognise a BAH 1 domain in the interval 752 to 877; that stretch reads ETLEVGDCVS…QDYARFESPP (126 aa). Ser-875 carries the phosphoserine modification. An N6-acetyllysine mark is found at Lys-888, Lys-954, Lys-958, Lys-972, and Lys-1051. The BAH 2 domain occupies 969–1097; it reads HYRKYSDYIK…AKSKSFEDPP (129 aa). The tract at residues 1091–1126 is disordered; that stretch reads KSFEDPPNHARSTGNKGKGKGKGKNRTKSQTCEPSE. 4 tandem repeats follow at residues 1106–1107, 1108–1109, 1110–1111, and 1112–1113. Positions 1106–1115 are 5 X 2 AA tandem repeats of K-G; sequence KGKGKGKGKN. Basic residues predominate over residues 1107 to 1117; sequence GKGKGKGKNRT. N6-acetyllysine is present on residues Lys-1108, Lys-1110, Lys-1112, Lys-1114, and Lys-1118. Residues 1114–1115 form a 5; approximate repeat; it reads KN. Residues 1118–1611 are interaction with the PRC2/EED-EZH2 complex; it reads KSQTCEPSEL…AKIKEEAAKD (494 aa). Positions 1136–1595 constitute an SAM-dependent MTase C5-type domain; sequence LRTLDVFSGC…LEIKRCMLAK (460 aa). The interval 1136–1611 is catalytic; it reads LRTLDVFSGC…AKIKEEAAKD (476 aa). S-adenosyl-L-methionine-binding positions include Ser-1143, 1147–1148, 1165–1166, 1187–1188, and Cys-1188; these read GL, EM, and DC. Residue Cys-1223 is part of the active site. An N6-acetyllysine mark is found at Lys-1346 and Lys-1412. Residues Asn-1574 and Val-1576 each coordinate S-adenosyl-L-methionine. Residue Lys-1605 forms a Glycyl lysine isopeptide (Lys-Gly) (interchain with G-Cter in SUMO2) linkage.

The protein belongs to the class I-like SAM-binding methyltransferase superfamily. C5-methyltransferase family. Homodimer. Forms a stable complex with E2F1, BB1 and HDAC1. Forms a complex with DMAP1 and HDAC2, with direct interaction. Interacts with the PRC2/EED-EZH2 complex. Probably part of a corepressor complex containing ZNF304, TRIM28, SETDB1 and DNMT1. Interacts with UHRF1; promoting its recruitment to hemimethylated DNA. Interacts with USP7, promoting its deubiquitination. Interacts with PCNA. Interacts with MBD2 and MBD3. Interacts with DNMT3A and DNMT3B. Interacts with UBC9. Interacts with CSNK1D. Interacts with HDAC1. Interacts with BAZ2A/TIP5. Interacts with SIRT7. Interacts with ZNF263; recruited to the SIX3 promoter along with other proteins involved in chromatin modification and transcriptional corepression where it contributes to transcriptional repression. Interacts with L3MBTL3 and DCAF5; the interaction requires DNMT1 methylation at Lys-142 and is necessary to target DNMT1 for ubiquitination by the CRL4-DCAF5 E3 ubiquitin ligase complex and proteasomal degradation. Interacts with PHF20L1; the interaction requires DNMT1 methylation at Lys-142 and protects DNMT1 from ubiquitination and proteasomal degradation. Sumoylated; sumoylation increases activity. In terms of processing, acetylation on multiple lysines, mainly by KAT2B/PCAF, regulates cell cycle G(2)/M transition. Deacetylation of Lys-1346 and Lys-1412 by SIRT1 increases methyltransferase activity. Post-translationally, phosphorylation of Ser-154 by CDKs is important for enzymatic activity and protein stability. Phosphorylation of Ser-143 by AKT1 prevents methylation by SETD7 thereby increasing DNMT1 stability. Methylation at Lys-142 by SETD7 is necessary for the regulation of DNMT1 proteasomal degradation. In terms of processing, ubiquitinated by UHRF1; interaction with USP7 counteracts ubiquitination by UHRF1 by promoting deubiquitination and preventing degradation by the proteasome.

Its subcellular location is the nucleus. The enzyme catalyses a 2'-deoxycytidine in DNA + S-adenosyl-L-methionine = a 5-methyl-2'-deoxycytidine in DNA + S-adenosyl-L-homocysteine + H(+). In terms of biological role, methylates CpG residues. Preferentially methylates hemimethylated DNA. Associates with DNA replication sites in S phase maintaining the methylation pattern in the newly synthesized strand, that is essential for epigenetic inheritance. Associates with chromatin during G2 and M phases to maintain DNA methylation independently of replication. It is responsible for maintaining methylation patterns established in development. DNA methylation is coordinated with methylation of histones. Mediates transcriptional repression by direct binding to HDAC2. In association with DNMT3B and via the recruitment of CTCFL/BORIS, involved in activation of BAG1 gene expression by modulating dimethylation of promoter histone H3 at H3K4 and H3K9. Probably forms a corepressor complex required for activated KRAS-mediated promoter hypermethylation and transcriptional silencing of tumor suppressor genes (TSGs) or other tumor-related genes in colorectal cancer (CRC) cells. Also required to maintain a transcriptionally repressive state of genes in undifferentiated embryonic stem cells (ESCs). Associates at promoter regions of tumor suppressor genes (TSGs) leading to their gene silencing. Promotes tumor growth. In Bos taurus (Bovine), this protein is DNA (cytosine-5)-methyltransferase 1 (DNMT1).